The sequence spans 417 residues: WD repeat and FYVE domain-containing protein 2 (417 aa).

WD repeat units follow at residues 29–68 (GHVARINDVILLSKDEGVWTASDDRSVRLYLKRDNDQFWP), 119–157 (CHAGPISGLGFALSSELIFSCSRDKSIVWHCSENSNKVG), 202–241 (AHTNSITSLTWDGNKKVLYSGSSDHLIIMWDIGGGKGEAY), and 245–284 (GHNGKVTTLCAAPAAKRLFSADEHGKLMCWDMDVRRVETP). Residues 286 to 357 (WKTSDCCQKC…ICNDCAGRMK (72 aa)) form an FYVE-type zinc finger. Zn(2+) is bound by residues cysteine 292, cysteine 295, cysteine 319, cysteine 322, cysteine 327, cysteine 330, cysteine 349, and cysteine 352. The stretch at 373 to 412 (EIRTGITAMHLQETLGLLVTSGQNRVVMIWDVRSVCSAPS) is one WD 5 repeat.

Its function is as follows. Plays a role in coelomocyte endocytosis. The sequence is that of WD repeat and FYVE domain-containing protein 2 from Caenorhabditis briggsae.